The following is a 58-amino-acid chain: UPF0434 protein NT01EI_2448 (58 aa).

Belongs to the UPF0434 family.

The sequence is that of UPF0434 protein NT01EI_2448 from Edwardsiella ictaluri (strain 93-146).